We begin with the raw amino-acid sequence, 123 residues long: Fluoride-specific ion channel FluC (123 aa).

Transmembrane regions (helical) follow at residues 7–27 (LLLIIGGGLGALARYYISGIL), 39–59 (LVNSIASFILGYLYGLLFFGF), 67–87 (IFLGTGFCGGLSTFSTFSYET), and 100–120 (FMNVVANVLVTITLVFLGFIL). The Na(+) site is built by glycine 75 and serine 78.

Belongs to the fluoride channel Fluc/FEX (TC 1.A.43) family.

The protein resides in the cell membrane. The enzyme catalyses fluoride(in) = fluoride(out). Its activity is regulated as follows. Na(+) is not transported, but it plays an essential structural role and its presence is essential for fluoride channel function. Its function is as follows. Fluoride-specific ion channel. Important for reducing fluoride concentration in the cell, thus reducing its toxicity. The sequence is that of Fluoride-specific ion channel FluC from Pyrococcus abyssi (strain GE5 / Orsay).